Consider the following 491-residue polypeptide: MKAIMAVGTTSHAGKSFLTAALCRLFNRKGWQVTPFKGQNMALNAYVTAGGGEMGHAQAVQAWAAGTIPRVEMNPILLKPQGNMTSQVIIKGKAVGVTTAVDYYQNYFEQGWQAIKESLAKLSAEFDLVVCEGAGSPAEINLKHRDLTNMRVAKYLDAATILVVDIDRGGAFAHVVGTLELLEPEERALIKGIVINKFRGQKSLLDSGITWLEDYTKIPVLGVLPYSDIFLSAEDSLSLLDRPAQKPKAELNIIVIRLPHIANFTDFDPLCGEATVNVRYLELQESLGDPDGVIIPGSKTTVADLIALNQSGMANQLQAYHQRGGIIFGICGGLQMLGRLILDTDHREGPESEAAGLNLLPLKTVITAEKITRQRQVLSNYPQGGLPVMGYEIHQGISQWESESGYQKMFEEDASLGIVNDSLSIWGCYLHGIFDNGSWRRTWLNHLRQRRGLLSLPTGIANYCEQREITLDNMANLLEEHLNLQPIFAHL.

The GATase cobBQ-type domain maps to 250-439 (ELNIIVIRLP…LHGIFDNGSW (190 aa)). Residue C331 is the Nucleophile of the active site. The active site involves H431.

This sequence belongs to the CobB/CobQ family. CobQ subfamily.

The protein operates within cofactor biosynthesis; adenosylcobalamin biosynthesis. In terms of biological role, catalyzes amidations at positions B, D, E, and G on adenosylcobyrinic A,C-diamide. NH(2) groups are provided by glutamine, and one molecule of ATP is hydrogenolyzed for each amidation. This is Cobyric acid synthase from Microcystis aeruginosa (strain NIES-843 / IAM M-2473).